A 318-amino-acid polypeptide reads, in one-letter code: Formimidoylglutamase (318 aa).

6 residues coordinate Mn(2+): His-130, Asp-155, His-157, Asp-159, Asp-246, and Asp-248.

The protein belongs to the arginase family. It depends on Mn(2+) as a cofactor.

It carries out the reaction N-formimidoyl-L-glutamate + H2O = formamide + L-glutamate. It functions in the pathway amino-acid degradation; L-histidine degradation into L-glutamate; L-glutamate from N-formimidoyl-L-glutamate (hydrolase route): step 1/1. Functionally, catalyzes the conversion of N-formimidoyl-L-glutamate to L-glutamate and formamide. The sequence is that of Formimidoylglutamase from Photorhabdus laumondii subsp. laumondii (strain DSM 15139 / CIP 105565 / TT01) (Photorhabdus luminescens subsp. laumondii).